A 106-amino-acid chain; its full sequence is Isocitrate dehydrogenase [NAD] subunit gamma, mitochondrial (106 aa).

This sequence belongs to the isocitrate and isopropylmalate dehydrogenases family. Heterooligomer of subunits alpha (IDH3A), beta (IDH3B), and gamma (IDH3G) in the apparent ratio of 2:1:1. The heterodimer containing one IDH3A and one IDH3B subunit and the heterodimer containing one IDH3A and one IDH3G subunit assemble into a heterotetramer (which contains two subunits of IDH3A, one of IDH3B and one of IDH3G) and further into the heterooctamer.

The protein resides in the mitochondrion. Its activity is regulated as follows. The heterotetramer and the heterodimer composed of IDH3A and IDH3G subunits can be allosterically activated by citrate (CIT) or/and ADP, and the two activators can act independently or synergistically. The heterodimer composed of IDH3A and IDH3B subunits cannot be allosterically regulated and the allosteric regulation of the heterotetramer is through the IDH3G subunit and not the IDH3B subunit. The IDH3G subunit contains the allosteric site which consists of a CIT-binding site and an ADP-binding site, and the binding of CIT and ADP causes conformational changes at the allosteric site which are transmitted to the active site in the catalytic subunit (IDH3A) through a cascade of conformational changes at the heterodimer interface, leading to stabilization of the isocitrate-binding at the active site and thus activation of the enzyme. ATP can activate the heterotetramer and the heterodimer composed of IDH3A and IDH3G subunits at low concentrations but inhibits their activities at high concentrations, whereas ATP exhibits only inhibitory effect on the heterodimer composed of IDH3A and IDH3B subunits. Regulatory subunit which plays a role in the allosteric regulation of the enzyme catalyzing the decarboxylation of isocitrate (ICT) into alpha-ketoglutarate. The heterodimer composed of the alpha (IDH3A) and beta (IDH3B) subunits and the heterodimer composed of the alpha (IDH3A) and gamma (IDH3G) subunits, have considerable basal activity but the full activity of the heterotetramer (containing two subunits of IDH3A, one of IDH3B and one of IDH3G) requires the assembly and cooperative function of both heterodimers. The sequence is that of Isocitrate dehydrogenase [NAD] subunit gamma, mitochondrial (IDH3G) from Sus scrofa (Pig).